The sequence spans 136 residues: Histone H3.2 (136 aa).

The segment at 1 to 42 (MARTKQTARKSTGGKAPRKQLATKAARKSAPSAGGVKKPHRY) is disordered. N6,N6,N6-trimethyllysine; alternate is present on K5. N6,N6-dimethyllysine; alternate is present on K5. N6-methyllysine; alternate is present on residues K5 and K10. N6-acetyllysine; alternate is present on K10. At S11 the chain carries Phosphoserine. Position 15 is an N6,N6-dimethyllysine; alternate (K15). Residues K15, K19, K24, K28, and K37 each carry the N6-acetyllysine; alternate modification. K19, K24, K28, and K37 each carry N6-methyllysine; alternate. An N6,N6,N6-trimethyllysine; alternate mark is found at K28 and K37. K28 and K37 each carry N6,N6-dimethyllysine; alternate. N6-acetyllysine occurs at positions 57 and 65. Position 80 is an N6,N6,N6-trimethyllysine; alternate (K80). K80 is subject to N6,N6-dimethyllysine; alternate. K80 bears the N6-methyllysine; alternate mark.

It belongs to the histone H3 family. The nucleosome is a histone octamer containing two molecules each of H2A, H2B, H3 and H4 assembled in one H3-H4 heterotetramer and two H2A-H2B heterodimers. The octamer wraps approximately 147 bp of DNA. In terms of processing, phosphorylated to form H3S10ph. H3S10ph promotes subsequent H3K14ac formation and is required for transcriptional activation through TBP recruitment to the promoters. Mono-, di- and trimethylated by the COMPASS complex to form H3K4me1/2/3. H3K4me activates gene expression by regulating transcription elongation and plays a role in telomere length maintenance. H3K4me enrichment correlates with transcription levels, and occurs in a 5' to 3' gradient with H3K4me3 enrichment at the 5'-end of genes, shifting to H3K4me2 and then H3K4me1. Methylated by SET2 to form H3K36me. H3K36me represses gene expression. Methylated by DOT1 to form H3K79me. H3K79me is required for association of SIR proteins with telomeric regions and for telomeric silencing. The COMPASS-mediated formation of H3K4me2/3 and the DOT1-mediated formation of H3K79me require H2BK123ub1. Post-translationally, acetylation of histone H3 leads to transcriptional activation. H3K14ac formation by GCN5 is promoted by H3S10ph. H3K14ac can also be formed by ESA1. H3K56ac formation occurs predominantly in newly synthesized H3 molecules during G1, S and G2/M of the cell cycle and may be involved in DNA repair.

Its subcellular location is the nucleus. The protein localises to the chromosome. Functionally, core component of nucleosome. Nucleosomes wrap and compact DNA into chromatin, limiting DNA accessibility to the cellular machineries which require DNA as a template. Histones thereby play a central role in transcription regulation, DNA repair, DNA replication and chromosomal stability. DNA accessibility is regulated via a complex set of post-translational modifications of histones, also called histone code, and nucleosome remodeling. The chain is Histone H3.2 (HHT2) from Mycosarcoma maydis (Corn smut fungus).